An 812-amino-acid chain; its full sequence is Lon protease (812 aa).

One can recognise a Lon N-terminal domain in the interval 22 to 215; sequence YAVLPLRDIV…KALSFMEAEI (194 aa). Residue 367–374 coordinates ATP; the sequence is GPPGVGKT. The region spanning 602–783 is the Lon proteolytic domain; sequence EDQVGVVTGL…GEVLKHALVR (182 aa). Active-site residues include Ser689 and Lys732. The tract at residues 787–812 is disordered; the sequence is PIEWTEQENPTAVPPVEDEAGASLAH.

It belongs to the peptidase S16 family. In terms of assembly, homohexamer. Organized in a ring with a central cavity.

It is found in the cytoplasm. The enzyme catalyses Hydrolysis of proteins in presence of ATP.. ATP-dependent serine protease that mediates the selective degradation of mutant and abnormal proteins as well as certain short-lived regulatory proteins. Required for cellular homeostasis and for survival from DNA damage and developmental changes induced by stress. Degrades polypeptides processively to yield small peptide fragments that are 5 to 10 amino acids long. Binds to DNA in a double-stranded, site-specific manner. Required for wild-type virulence during the initial stages of infection in the mouse model, but not essential for the establishment and maintenance of chronic infection in this host. The protein is Lon protease of Brucella abortus (strain 2308).